The sequence spans 162 residues: Cyanate hydratase (162 aa).

Residues Arg-90, Glu-93, and Ser-116 contribute to the active site.

Belongs to the cyanase family.

It carries out the reaction cyanate + hydrogencarbonate + 3 H(+) = NH4(+) + 2 CO2. In terms of biological role, catalyzes the reaction of cyanate with bicarbonate to produce ammonia and carbon dioxide. This is Cyanate hydratase from Populus trichocarpa (Western balsam poplar).